Reading from the N-terminus, the 1003-residue chain is Glycine--tRNA ligase (1003 aa).

The tract at residues 1–310 (MSSQPLTLQT…VTPKKIPTIC (310 aa)) is glycine--tRNA ligase alpha subunit. Positions 311 to 1003 (QPEDFLLEIG…CFGFYAWGVL (693 aa)) are glycine--tRNA ligase beta subunit.

It belongs to the class-II aminoacyl-tRNA synthetase family.

The protein localises to the cytoplasm. The enzyme catalyses tRNA(Gly) + glycine + ATP = glycyl-tRNA(Gly) + AMP + diphosphate. The chain is Glycine--tRNA ligase (glyQS) from Chlamydia trachomatis serovar D (strain ATCC VR-885 / DSM 19411 / UW-3/Cx).